Consider the following 340-residue polypeptide: Pesticidal crystal protein Cry15Aa (340 aa).

A disordered region spans residues 318 to 340 (RDYDKEHICHDQAEKYERDYDKE).

In terms of biological role, promotes colloidosmotic lysis by binding to the midgut epithelial cells of lepidopteran larvae. This chain is Pesticidal crystal protein Cry15Aa (cry15Aa), found in Bacillus thuringiensis subsp. thompsoni.